A 259-amino-acid chain; its full sequence is Tubulin-specific chaperone C (259 aa).

Positions Pro112–Trp241 constitute a C-CAP/cofactor C-like domain.

The protein belongs to the TBCC family.

Its subcellular location is the cytoplasm. It is found in the cytoskeleton. Tubulin-folding protein; involved in the final step of the tubulin folding pathway. The sequence is that of Tubulin-specific chaperone C (cin2) from Schizosaccharomyces pombe (strain 972 / ATCC 24843) (Fission yeast).